The sequence spans 493 residues: Probable protein phosphatase 2C 40 (493 aa).

One can recognise a PPM-type phosphatase domain in the interval 145-480 (LLSAMEVQVA…DDVTIMVITL (336 aa)). Asp180, Gly181, Asp408, and Asp471 together coordinate Mn(2+).

This sequence belongs to the PP2C family. The cofactor is Mg(2+). Mn(2+) is required as a cofactor.

The catalysed reaction is O-phospho-L-seryl-[protein] + H2O = L-seryl-[protein] + phosphate. It catalyses the reaction O-phospho-L-threonyl-[protein] + H2O = L-threonyl-[protein] + phosphate. The protein is Probable protein phosphatase 2C 40 of Arabidopsis thaliana (Mouse-ear cress).